Here is a 678-residue protein sequence, read N- to C-terminus: Protein CASP (678 aa).

Residues 1-619 (MAANVGSMFQ…LVLSNKMART (619 aa)) are Cytoplasmic-facing. 2 coiled-coil regions span residues 67–450 (LLKS…QDLS) and 502–556 (LSII…FLQS). Ser586 bears the Phosphoserine mark. The chain crosses the membrane as a helical; Anchor for type IV membrane protein span at residues 620 to 640 (IGFFYTLFLHCLVFLVLYKLA). The Lumenal segment spans residues 641–678 (WSESMERDCATFCAKKFADHLHKFHENDNGAAAGDLWQ).

The protein belongs to the CASP family. In terms of assembly, homodimer; disulfide-linked. Interacts with GOLGA5.

It localises to the golgi apparatus membrane. May be involved in intra-Golgi retrograde transport. The polypeptide is Protein CASP (CUTL1) (Pongo abelii (Sumatran orangutan)).